The chain runs to 517 residues: Ubiquitin carboxyl-terminal hydrolase 30 (517 aa).

The Mitochondrial intermembrane portion of the chain corresponds to 1-35; sequence MLSSRAQAARTAADKALQRFLRTGAAVRYKVMKNW. The chain crosses the membrane as a helical span at residues 36-56; it reads GVIGGIAAALAAGIYVIWGPI. Residues 57-517 are Cytoplasmic-facing; that stretch reads TERKKRRKGL…QQGREYRSEE (461 aa). Residues 68 to 502 enclose the USP domain; sequence PGLVNLGNTC…SAYLLFYERV (435 aa). Residue Cys-77 is the Nucleophile of the active site. Residues Lys-235 and Lys-289 each participate in a glycyl lysine isopeptide (Lys-Gly) (interchain with G-Cter in ubiquitin) cross-link. Positions 364–395 are disordered; the sequence is SQHGPKATESPGSALGVQDTQAAPKPGLSQPA. His-452 acts as the Proton acceptor in catalysis.

The protein belongs to the peptidase C19 family. Post-translationally, ubiquitinated by parkin (PRKN) at Lys-235 and Lys-289, leading to its degradation.

Its subcellular location is the mitochondrion outer membrane. The catalysed reaction is Thiol-dependent hydrolysis of ester, thioester, amide, peptide and isopeptide bonds formed by the C-terminal Gly of ubiquitin (a 76-residue protein attached to proteins as an intracellular targeting signal).. Its activity is regulated as follows. Inhibited by the diterpenoid derivative 15-oxospiramilactone (S3). Its function is as follows. Deubiquitinating enzyme tethered to the mitochondrial outer membrane that acts as a key inhibitor of mitophagy by counteracting the action of parkin (PRKN): hydrolyzes ubiquitin attached by parkin on target proteins, such as RHOT1/MIRO1 and TOMM20, thereby blocking parkin's ability to drive mitophagy. Preferentially cleaves 'Lys-6'- and 'Lys-11'-linked polyubiquitin chains, 2 types of linkage that participate in mitophagic signaling. Does not cleave efficiently polyubiquitin phosphorylated at 'Ser-65'. Acts as a negative regulator of mitochondrial fusion by mediating deubiquitination of MFN1 and MFN2. The sequence is that of Ubiquitin carboxyl-terminal hydrolase 30 (Usp30) from Rattus norvegicus (Rat).